The chain runs to 118 residues: Small ribosomal subunit protein mS37 (118 aa).

Residues glutamate 42–arginine 84 enclose the CHCH domain. 2 consecutive short sequence motifs (cx9C motif) follow at residues cysteine 45–cysteine 55 and cysteine 66–cysteine 76. 2 cysteine pairs are disulfide-bonded: cysteine 45/cysteine 76 and cysteine 55/cysteine 66. Residues methionine 86–threonine 105 are disordered. Residues isoleucine 89 to leucine 99 show a composition bias toward polar residues.

This sequence belongs to the mitochondrion-specific ribosomal protein mS37 family. As to quaternary structure, component of the mitochondrial ribosome small subunit (28S) which comprises a 12S rRNA and about 30 distinct proteins.

The protein resides in the mitochondrion. The protein localises to the nucleus. This chain is Small ribosomal subunit protein mS37 (Chchd1), found in Mus musculus (Mouse).